The following is a 345-amino-acid chain: MPRIDADLKLDFKDVLLRPKRSSLKSRAEVDLERTFTFRNSKQTYSGIPIIVANMDTVGTFEMAAVMSQHSMFTAIHKHYSLDDWKLFATNHPECLQNVAVSSGSGQNDLEKMTSILEAVPQVKFICLDVANGYSEHFVEFVKLVRAKFPEHTIMAGNVVTGEMVEELILSGADIIKVGVGPGSVCTTRTKTGVGYPQLSAVIECADSAHGLKGHIISDGGCTCPGDVAKAFGAGADFVMLGGMFSGHTECAGEVFERNGRKLKLFYGMSSDTAMNKHAGGVAEYRASEGKTVEVPYKGDVENTILDILGGLRSTCTYVGAAKLKELSRRATFIRVTQQHNTVFS.

NADP(+)-binding positions include 26–27 (SR), Lys-78, 129–131 (DVA), and 180–181 (VG). Gly-181, Gly-183, and Cys-186 together coordinate K(+). Cys-186 (thioimidate intermediate) is an active-site residue. Residue Thr-188 is the Proton donor/acceptor of the active site. Arg-189 lines the K(+) pocket. Residues 219-221 (DGG), 242-243 (GG), 268-270 (GMS), and 286-290 (RASEG) contribute to the GMP site. Residues Met-269, 285–286 (YR), and 314–317 (STCT) contribute to the NADP(+) site.

It belongs to the IMPDH/GMPR family. GuaC type 1 subfamily. As to quaternary structure, homotetramer.

The catalysed reaction is IMP + NH4(+) + NADP(+) = GMP + NADPH + 2 H(+). In terms of biological role, catalyzes the irreversible NADPH-dependent deamination of GMP to IMP. It functions in the conversion of nucleobase, nucleoside and nucleotide derivatives of G to A nucleotides, and in maintaining the intracellular balance of A and G nucleotides. This chain is GMP reductase 1 (GMPR), found in Homo sapiens (Human).